Reading from the N-terminus, the 515-residue chain is 1-pyrroline-5-carboxylate dehydrogenase (515 aa).

Residues Glu-286 and Cys-320 contribute to the active site.

This sequence belongs to the aldehyde dehydrogenase family. RocA subfamily.

The catalysed reaction is L-glutamate 5-semialdehyde + NAD(+) + H2O = L-glutamate + NADH + 2 H(+). Its pathway is amino-acid degradation; L-proline degradation into L-glutamate; L-glutamate from L-proline: step 2/2. This chain is 1-pyrroline-5-carboxylate dehydrogenase, found in Geobacillus thermodenitrificans (strain NG80-2).